Here is a 278-residue protein sequence, read N- to C-terminus: Dermonecrotic toxin LspiSicTox-betaIE2iii (278 aa).

The active site involves H5. E25 and D27 together coordinate Mg(2+). Residue H41 is the Nucleophile of the active site. Disulfide bonds link C45/C51 and C47/C190. D85 is a Mg(2+) binding site.

Belongs to the arthropod phospholipase D family. Class II subfamily. Mg(2+) is required as a cofactor. Expressed by the venom gland.

It is found in the secreted. It carries out the reaction an N-(acyl)-sphingosylphosphocholine = an N-(acyl)-sphingosyl-1,3-cyclic phosphate + choline. The catalysed reaction is an N-(acyl)-sphingosylphosphoethanolamine = an N-(acyl)-sphingosyl-1,3-cyclic phosphate + ethanolamine. It catalyses the reaction a 1-acyl-sn-glycero-3-phosphocholine = a 1-acyl-sn-glycero-2,3-cyclic phosphate + choline. The enzyme catalyses a 1-acyl-sn-glycero-3-phosphoethanolamine = a 1-acyl-sn-glycero-2,3-cyclic phosphate + ethanolamine. Functionally, dermonecrotic toxins cleave the phosphodiester linkage between the phosphate and headgroup of certain phospholipids (sphingolipid and lysolipid substrates), forming an alcohol (often choline) and a cyclic phosphate. This toxin acts on sphingomyelin (SM). It may also act on ceramide phosphoethanolamine (CPE), lysophosphatidylcholine (LPC) and lysophosphatidylethanolamine (LPE), but not on lysophosphatidylserine (LPS), and lysophosphatidylglycerol (LPG). It acts by transphosphatidylation, releasing exclusively cyclic phosphate products as second products. Induces dermonecrosis, hemolysis, increased vascular permeability, edema, inflammatory response, and platelet aggregation. The polypeptide is Dermonecrotic toxin LspiSicTox-betaIE2iii (Loxosceles spinulosa (Recluse spider)).